Here is a 320-residue protein sequence, read N- to C-terminus: Cytochrome f (320 aa).

The first 35 residues, 1–35 (MENRKTFSWLKEQMIRSISVSIMIYVITRTSISNA), serve as a signal peptide directing secretion. Positions 36, 56, 59, and 60 each coordinate heme. The chain crosses the membrane as a helical span at residues 286–305 (VQGLLFFFASVILAQVFLVL).

This sequence belongs to the cytochrome f family. In terms of assembly, the 4 large subunits of the cytochrome b6-f complex are cytochrome b6, subunit IV (17 kDa polypeptide, petD), cytochrome f and the Rieske protein, while the 4 small subunits are PetG, PetL, PetM and PetN. The complex functions as a dimer. Heme serves as cofactor.

The protein resides in the plastid. The protein localises to the chloroplast thylakoid membrane. Component of the cytochrome b6-f complex, which mediates electron transfer between photosystem II (PSII) and photosystem I (PSI), cyclic electron flow around PSI, and state transitions. The sequence is that of Cytochrome f (petA) from Zea mays (Maize).